The chain runs to 127 residues: Single-stranded DNA-binding protein 2 (127 aa).

The SSB domain occupies 4–103 (INKVMLVGRC…ITINTIELLG (100 aa)). The interval 104–127 (SPRKEESTSTSAPNETQAVANANF) is disordered. Polar residues predominate over residues 111 to 127 (TSTSAPNETQAVANANF).

In terms of assembly, homotetramer.

In Nostoc sp. (strain PCC 7120 / SAG 25.82 / UTEX 2576), this protein is Single-stranded DNA-binding protein 2 (ssb2).